We begin with the raw amino-acid sequence, 124 residues long: Small ribosomal subunit protein uS12cz/uS12cy (124 aa).

It belongs to the universal ribosomal protein uS12 family. In terms of assembly, part of the 30S ribosomal subunit.

The protein resides in the plastid. In terms of biological role, with S4 and S5 plays an important role in translational accuracy. Located at the interface of the 30S and 50S subunits. The sequence is that of Small ribosomal subunit protein uS12cz/uS12cy (rps12-A) from Epifagus virginiana (Beechdrops).